The primary structure comprises 56 residues: Small ribosomal subunit protein bS21 (56 aa).

It belongs to the bacterial ribosomal protein bS21 family.

This is Small ribosomal subunit protein bS21 from Synechococcus sp. (strain RCC307).